The following is a 120-amino-acid chain: Large ribosomal subunit protein uL18 (120 aa).

A disordered region spans residues 1 to 23 (MKLSRKESVRRRHQRVRRKINGT). Residues 8 to 20 (SVRRRHQRVRRKI) show a composition bias toward basic residues.

The protein belongs to the universal ribosomal protein uL18 family. As to quaternary structure, part of the 50S ribosomal subunit; part of the 5S rRNA/L5/L18/L25 subcomplex. Contacts the 5S and 23S rRNAs.

In terms of biological role, this is one of the proteins that bind and probably mediate the attachment of the 5S RNA into the large ribosomal subunit, where it forms part of the central protuberance. In Microcystis aeruginosa (strain NIES-843 / IAM M-2473), this protein is Large ribosomal subunit protein uL18.